Consider the following 932-residue polypeptide: Isoleucine--tRNA ligase (932 aa).

Positions 57-67 match the 'HIGH' region motif; sequence PYANGNIHLGH. An L-isoleucyl-5'-AMP-binding site is contributed by E552. Positions 593–597 match the 'KMSKS' region motif; sequence KMSKS. K596 lines the ATP pocket. Positions 889, 892, 911, and 914 each coordinate Zn(2+).

It belongs to the class-I aminoacyl-tRNA synthetase family. IleS type 1 subfamily. In terms of assembly, monomer. The cofactor is Zn(2+).

The protein localises to the cytoplasm. It carries out the reaction tRNA(Ile) + L-isoleucine + ATP = L-isoleucyl-tRNA(Ile) + AMP + diphosphate. Functionally, catalyzes the attachment of isoleucine to tRNA(Ile). As IleRS can inadvertently accommodate and process structurally similar amino acids such as valine, to avoid such errors it has two additional distinct tRNA(Ile)-dependent editing activities. One activity is designated as 'pretransfer' editing and involves the hydrolysis of activated Val-AMP. The other activity is designated 'posttransfer' editing and involves deacylation of mischarged Val-tRNA(Ile). The sequence is that of Isoleucine--tRNA ligase from Lactococcus lactis subsp. lactis (strain IL1403) (Streptococcus lactis).